Here is a 486-residue protein sequence, read N- to C-terminus: NADH-quinone oxidoreductase subunit N (486 aa).

14 helical membrane-spanning segments follow: residues 11–31 (ALPE…DLFV), 44–64 (MLAL…YPVL), 74–94 (PIAS…MIYA), 103–123 (FLKG…CVMV), 128–148 (MLTL…LIAL), 163–183 (FVLG…VYGG), 206–226 (VSLG…AVPF), 238–258 (PTAV…VFVI), 267–287 (PAAV…LVVG), 300–320 (MLAY…LAAT), 328–348 (MFYA…LLAL), 371–391 (YALL…LVGF), 404–424 (VGLT…AFYY), and 452–472 (LVLG…NGLY).

The protein belongs to the complex I subunit 2 family. NDH-1 is composed of 14 different subunits. Subunits NuoA, H, J, K, L, M, N constitute the membrane sector of the complex.

The protein resides in the cell inner membrane. The enzyme catalyses a quinone + NADH + 5 H(+)(in) = a quinol + NAD(+) + 4 H(+)(out). In terms of biological role, NDH-1 shuttles electrons from NADH, via FMN and iron-sulfur (Fe-S) centers, to quinones in the respiratory chain. The immediate electron acceptor for the enzyme in this species is believed to be ubiquinone. Couples the redox reaction to proton translocation (for every two electrons transferred, four hydrogen ions are translocated across the cytoplasmic membrane), and thus conserves the redox energy in a proton gradient. This is NADH-quinone oxidoreductase subunit N from Laribacter hongkongensis (strain HLHK9).